A 121-amino-acid polypeptide reads, in one-letter code: Large ribosomal subunit protein bL12 (121 aa).

It belongs to the bacterial ribosomal protein bL12 family. Homodimer. Part of the ribosomal stalk of the 50S ribosomal subunit. Forms a multimeric L10(L12)X complex, where L10 forms an elongated spine to which 2 to 4 L12 dimers bind in a sequential fashion. Binds GTP-bound translation factors.

Functionally, forms part of the ribosomal stalk which helps the ribosome interact with GTP-bound translation factors. Is thus essential for accurate translation. The sequence is that of Large ribosomal subunit protein bL12 from Anoxybacillus flavithermus (strain DSM 21510 / WK1).